We begin with the raw amino-acid sequence, 1413 residues long: Sushi, nidogen and EGF-like domain-containing protein 1 (1413 aa).

Positions 1 to 24 (MRHGVAWALLVAAALGLGARGVRG) are cleaved as a signal peptide. The region spanning 103–258 (AFWADVDNRR…GRWAFRIDDA (156 aa)) is the NIDO domain. 2 N-linked (GlcNAc...) asparagine glycosylation sites follow: Asn145 and Asn204. 3 EGF-like domains span residues 268–309 (TTSV…RRCH), 311–347 (DVNE…PTCE), and 349–385 (AQSP…AACE). Intrachain disulfides connect Cys272/Cys284, Cys278/Cys297, Cys299/Cys308, Cys315/Cys326, Cys320/Cys335, Cys337/Cys346, Cys353/Cys364, Cys358/Cys373, Cys375/Cys384, Cys391/Cys402, Cys396/Cys411, Cys413/Cys422, Cys433/Cys444, Cys438/Cys453, Cys455/Cys464, Cys472/Cys480, Cys474/Cys488, and Cys490/Cys499. An N-linked (GlcNAc...) asparagine glycan is attached at Asn292. Positions 352 to 374 (PCDTKECQHGGQCQVENGSAVCV) constitute a Follistatin-like 1 domain. Asn368 is a glycosylation site (N-linked (GlcNAc...) asparagine). Residues 387-423 (DVDDCSPDPCLNGGSCVDLVGNYTCLCAEPFKGLRCE) enclose the EGF-like 4; calcium-binding domain. Asn408 is a glycosylation site (N-linked (GlcNAc...) asparagine). EGF-like domains lie at 429–465 (VPDA…LDCR) and 468–500 (VPDD…LLCE). N-linked (GlcNAc...) asparagine glycosylation occurs at Asn484. Positions 507–530 (PCNMNTQCPDGGYCMEHGGSYLCV) constitute a Follistatin-like 2 domain. A glycan (N-linked (GlcNAc...) asparagine) is linked at Asn536. EGF-like domains lie at 541–577 (LPSP…KHCE), 580–616 (RPHL…RHCE), 619–655 (KPDS…RHCE), and 657–693 (APSP…RRCQ). 26 cysteine pairs are disulfide-bonded: Cys545–Cys556, Cys550–Cys565, Cys567–Cys576, Cys584–Cys595, Cys589–Cys604, Cys606–Cys615, Cys623–Cys634, Cys628–Cys643, Cys645–Cys654, Cys661–Cys672, Cys666–Cys681, Cys683–Cys692, Cys698–Cys739, Cys724–Cys751, Cys757–Cys768, Cys762–Cys777, Cys779–Cys788, Cys795–Cys806, Cys800–Cys815, Cys817–Cys826, Cys833–Cys844, Cys838–Cys853, Cys855–Cys864, Cys871–Cys882, Cys876–Cys891, and Cys893–Cys902. Residues 696–753 (VDCGPPEEVKHATLRFNGTRLGAVALYACDRGYSLSAPSRIRVCQPHGVWSEPPQCLE) enclose the Sushi domain. N-linked (GlcNAc...) asparagine glycosylation occurs at Asn712. The region spanning 753 to 789 (EIDECRSQPCLHGGSCQDRVAGYLCLCSTGYEGAHCE) is the EGF-like 11; calcium-binding domain. An EGF-like 12; calcium-binding domain is found at 791–827 (ERDECRAHPCRNGGSCRNLPGAYVCRCPAGFVGVHCE). 2 EGF-like domains span residues 829–865 (EVDA…YHCE) and 867–903 (VSDP…EDCA). Asn886 carries an N-linked (GlcNAc...) asparagine glycan. Fibronectin type-III domains are found at residues 908–1006 (PPTA…TRPR), 1007–1105 (PVEG…TRPL), and 1106–1200 (PPAN…SPRD). Asn977, Asn1015, Asn1109, and Asn1139 each carry an N-linked (GlcNAc...) asparagine glycan. A disordered region spans residues 1206–1226 (WHQGGHHPRVLKNRPPPARLP). Positions 1207-1217 (HQGGHHPRVLK) are enriched in basic residues. One can recognise an EGF-like 15 domain in the interval 1307–1343 (VPGNCSENPCQNGGTCVPGADAHSCDCGPGFKGRRCE). Residue Asn1310 is glycosylated (N-linked (GlcNAc...) asparagine). Cystine bridges form between Cys1311-Cys1322, Cys1316-Cys1331, and Cys1333-Cys1342. Positions 1394 to 1413 (TSLKKTPNRKQSKSQTLEKS) are disordered.

Phosphorylated on serine and threonine residues. In terms of processing, N-glycosylated.

It is found in the secreted. The protein localises to the extracellular space. The protein resides in the extracellular matrix. This chain is Sushi, nidogen and EGF-like domain-containing protein 1, found in Homo sapiens (Human).